A 203-amino-acid polypeptide reads, in one-letter code: Probable host range protein 2-3 (203 aa).

Residues leucine 182–aspartate 203 are disordered.

The protein belongs to the poxviridae C7 protein family.

Plays a role for multiplication of the virus in different cell types. The protein is Probable host range protein 2-3 of Myxoma virus (strain Lausanne) (MYXV).